The following is a 490-amino-acid chain: Trigger factor (490 aa).

The region spanning G162–P243 is the PPIase FKBP-type domain. The interval V433 to E490 is disordered. Residues A454–E477 show a composition bias toward basic and acidic residues.

The protein belongs to the FKBP-type PPIase family. Tig subfamily.

The protein resides in the cytoplasm. The enzyme catalyses [protein]-peptidylproline (omega=180) = [protein]-peptidylproline (omega=0). Involved in protein export. Acts as a chaperone by maintaining the newly synthesized protein in an open conformation. Functions as a peptidyl-prolyl cis-trans isomerase. This is Trigger factor from Mycobacteroides abscessus (strain ATCC 19977 / DSM 44196 / CCUG 20993 / CIP 104536 / JCM 13569 / NCTC 13031 / TMC 1543 / L948) (Mycobacterium abscessus).